Consider the following 290-residue polypeptide: Glycine--tRNA ligase alpha subunit (290 aa).

This sequence belongs to the class-II aminoacyl-tRNA synthetase family. As to quaternary structure, tetramer of two alpha and two beta subunits.

The protein resides in the cytoplasm. It carries out the reaction tRNA(Gly) + glycine + ATP = glycyl-tRNA(Gly) + AMP + diphosphate. This chain is Glycine--tRNA ligase alpha subunit, found in Brachyspira hyodysenteriae (strain ATCC 49526 / WA1).